The following is a 906-amino-acid chain: Eukaryotic translation initiation factor 4 gamma 2 (906 aa).

Residue M1 is modified to N-acetylmethionine. The tract at residues 1-71 (MESAIAEGGA…SAANNSANEK (71 aa)) is disordered. S11 carries the post-translational modification Phosphoserine. Residues 78–308 (FRKVRGILNK…QDTVELREHH (231 aa)) enclose the MIF4G domain. Residue T89 is modified to Phosphothreonine. R359 is modified (omega-N-methylarginine). A Phosphoserine modification is found at S394. K430 is modified (N6-methyllysine). A Phosphoserine modification is found at S442. Positions 497–540 (PPSAQPPRTQTPPLGQTPQLGLKTNPPLIQEKPAKTSKKPPPSK) are disordered. Over residues 502-515 (PPRTQTPPLGQTPQ) the composition is skewed to polar residues. Omega-N-methylarginine is present on R504. A phosphothreonine mark is found at T507 and T513. An MI domain is found at 542 to 665 (ELLKLTEAVV…SISELAQPLE (124 aa)). K574 participates in a covalent cross-link: Glycyl lysine isopeptide (Lys-Gly) (interchain with G-Cter in SUMO2). In terms of domain architecture, W2 spans 719 to 903 (EGKGLSFLFP…ETAEEEESEE (185 aa)). Residue S901 is modified to Phosphoserine.

It belongs to the eukaryotic initiation factor 4G family. Interacts with the serine/threonine protein kinases MKNK1 and MKNK2. Binds EIF4A and EIF3. Interacts with MIF4GD. Interacts with DAZAP2. In terms of processing, phosphorylation; hyperphosphorylated during mitosis. As to expression, ubiquitously expressed in all tissues examined.

Its function is as follows. Appears to play a role in the switch from cap-dependent to IRES-mediated translation during mitosis, apoptosis and viral infection. Cleaved by some caspases and viral proteases. In Mus musculus (Mouse), this protein is Eukaryotic translation initiation factor 4 gamma 2.